A 496-amino-acid polypeptide reads, in one-letter code: MVEADHPGKLFIGGLNRETNEKMLKAVFGKHGPISEVLLIKDRTSKSRGFAFITFENPADAKNAAKDMNGKSLHGKAIKVEQAKKPSFQSGGRRRPPASSRNRSPSGSLRSARGSRGGTRGWLPSQEGHLDDGGYTPDLKMSYSRGLIPVKRGPSSRSGGPPPKKSAPSAVARSNSWMGSQGPMSQRRENYGVPPRRATISSWRNDRMSTRHDGYATNDGNHPSCQETRDYAPPSRGYAYRDNGHSNRDEHSSRGYRNHRSSRETRDYAPPSRGHAYRDYGHSRRDESYSRGYRNRRSSRETREYAPPSRGHGYRDYGHSRRHESYSRGYRNHPSSRETRDYAPPHRDYAYRDYGHSSWDEHSSRGYSYHDGYGEALGRDHSEHLSGSSYRDALQRYGTAHGAPPARGPRMSYGGSTCHAYSNTRDRYGRSWESYSSCGDFHYCDREHVCRKDQRNPPSLGRVLPDPREACGSSSYVASIVDGGESRSEKGDSSRY.

The RRM domain maps to 8 to 85 (GKLFIGGLNR…KAIKVEQAKK (78 aa)). 2 disordered regions span residues 67 to 348 (DMNG…PHRD) and 453 to 496 (DQRN…SSRY). Composition is skewed to low complexity over residues 97 to 114 (PASS…SARG) and 149 to 159 (PVKRGPSSRSG). The segment covering 175–184 (NSWMGSQGPM) has biased composition (polar residues). 6 stretches are compositionally biased toward basic and acidic residues: residues 204–214 (RNDRMSTRHDG), 242–253 (DNGHSNRDEHSS), 276–289 (AYRD…DESY), 313–326 (GYRD…HESY), 335–348 (SSRE…PHRD), and 484–496 (GESR…SSRY).

Interacts with splicing factor proteins SFRS3/SRP20, TRA2B/SFRS10, KHDRBS1/SAM68 and KHDRBS3. In terms of tissue distribution, testis-specific.

Its subcellular location is the nucleus. In terms of biological role, RNA-binding protein which may be involved in spermatogenesis. Required for sperm development, possibly by participating in pre-mRNA splicing in the testis. This is RNA-binding motif protein, Y chromosome, family 1 member E (RBMY1E) from Homo sapiens (Human).